The following is a 130-amino-acid chain: Histone H2A type 1-E (130 aa).

Positions 1 to 22 (MSGRGKQGGKARAKAKTRSSRA) are disordered. Residue S2 is modified to N-acetylserine. Phosphoserine; by RPS6KA5 is present on S2. Residue R4 is modified to Citrulline; alternate. R4 carries the symmetric dimethylarginine; by PRMT5; alternate modification. An N6-(2-hydroxyisobutyryl)lysine; alternate mark is found at K6 and K10. The residue at position 6 (K6) is an N6-acetyllysine; alternate. The span at 7–19 (QGGKARAKAKTRS) shows a compositional bias: basic residues. Position 10 is an N6-lactoyllysine; alternate (K10). K10 is subject to N6-succinyllysine; alternate. Glycyl lysine isopeptide (Lys-Gly) (interchain with G-Cter in ubiquitin) cross-links involve residues K14 and K16. At K37 the chain carries N6-(2-hydroxyisobutyryl)lysine; alternate. The residue at position 37 (K37) is an N6-(beta-hydroxybutyryl)lysine; alternate. The residue at position 37 (K37) is an N6-crotonyllysine; alternate. K75 and K76 each carry N6-(2-hydroxyisobutyryl)lysine. K96 is subject to N6-(2-hydroxyisobutyryl)lysine; alternate. Position 96 is an N6-succinyllysine; alternate (K96). The residue at position 96 (K96) is an N6-glutaryllysine; alternate. Q105 is subject to N5-methylglutamine. K119 bears the N6-(2-hydroxyisobutyryl)lysine; alternate mark. N6-crotonyllysine; alternate is present on residues K119 and K120. K119 and K120 each carry N6-glutaryllysine; alternate. K120 participates in a covalent cross-link: Glycyl lysine isopeptide (Lys-Gly) (interchain with G-Cter in ubiquitin); alternate. T121 bears the Phosphothreonine; by DCAF1 mark. Residue K126 is modified to N6-crotonyllysine; alternate. K126 carries the N6-glutaryllysine; alternate modification.

It belongs to the histone H2A family. In terms of assembly, the nucleosome is a histone octamer containing two molecules each of H2A, H2B, H3 and H4 assembled in one H3-H4 heterotetramer and two H2A-H2B heterodimers. The octamer wraps approximately 147 bp of DNA. Deiminated on Arg-4 in granulocytes upon calcium entry. In terms of processing, monoubiquitination of Lys-120 (H2AK119Ub) by RING1, TRIM37 and RNF2/RING2 complex gives a specific tag for epigenetic transcriptional repression and participates in X chromosome inactivation of female mammals. It is involved in the initiation of both imprinted and random X inactivation. Ubiquitinated H2A is enriched in inactive X chromosome chromatin. Ubiquitination of H2A functions downstream of methylation of 'Lys-27' of histone H3 (H3K27me). H2AK119Ub by RNF2/RING2 can also be induced by ultraviolet and may be involved in DNA repair. Following DNA double-strand breaks (DSBs), it is ubiquitinated through 'Lys-63' linkage of ubiquitin moieties by the E2 ligase UBE2N and the E3 ligases RNF8 and RNF168, leading to the recruitment of repair proteins to sites of DNA damage. Ubiquitination at Lys-14 and Lys-16 (H2AK13Ub and H2AK15Ub, respectively) in response to DNA damage is initiated by RNF168 that mediates monoubiquitination at these 2 sites, and 'Lys-63'-linked ubiquitin are then conjugated to monoubiquitin; RNF8 is able to extend 'Lys-63'-linked ubiquitin chains in vitro. H2AK119Ub and ionizing radiation-induced 'Lys-63'-linked ubiquitination (H2AK13Ub and H2AK15Ub) are distinct events. Post-translationally, phosphorylation on Ser-2 (H2AS1ph) is enhanced during mitosis. Phosphorylation on Ser-2 by RPS6KA5/MSK1 directly represses transcription. Acetylation of H3 inhibits Ser-2 phosphorylation by RPS6KA5/MSK1. Phosphorylation at Thr-121 (H2AT120ph) by DCAF1 is present in the regulatory region of many tumor suppresor genes and down-regulates their transcription. Symmetric dimethylation on Arg-4 by the PRDM1/PRMT5 complex may play a crucial role in the germ-cell lineage. In terms of processing, glutamine methylation at Gln-105 (H2AQ104me) by FBL is specifically dedicated to polymerase I. It is present at 35S ribosomal DNA locus and impairs binding of the FACT complex. Post-translationally, crotonylation (Kcr) is specifically present in male germ cells and marks testis-specific genes in post-meiotic cells, including X-linked genes that escape sex chromosome inactivation in haploid cells. Crotonylation marks active promoters and enhancers and confers resistance to transcriptional repressors. It is also associated with post-meiotically activated genes on autosomes. Lactylated in macrophages by EP300/P300 by using lactoyl-CoA directly derived from endogenous or exogenous lactate, leading to stimulates gene transcription.

It localises to the nucleus. The protein resides in the chromosome. Core component of nucleosome. Nucleosomes wrap and compact DNA into chromatin, limiting DNA accessibility to the cellular machineries which require DNA as a template. Histones thereby play a central role in transcription regulation, DNA repair, DNA replication and chromosomal stability. DNA accessibility is regulated via a complex set of post-translational modifications of histones, also called histone code, and nucleosome remodeling. The chain is Histone H2A type 1-E from Rattus norvegicus (Rat).